The primary structure comprises 239 residues: Ribonuclease PH (239 aa).

Residues R86 and 124–126 (GTR) contribute to the phosphate site.

It belongs to the RNase PH family. Homohexameric ring arranged as a trimer of dimers.

It carries out the reaction tRNA(n+1) + phosphate = tRNA(n) + a ribonucleoside 5'-diphosphate. In terms of biological role, phosphorolytic 3'-5' exoribonuclease that plays an important role in tRNA 3'-end maturation. Removes nucleotide residues following the 3'-CCA terminus of tRNAs; can also add nucleotides to the ends of RNA molecules by using nucleoside diphosphates as substrates, but this may not be physiologically important. Probably plays a role in initiation of 16S rRNA degradation (leading to ribosome degradation) during starvation. In Rhizobium etli (strain CIAT 652), this protein is Ribonuclease PH.